Here is a 359-residue protein sequence, read N- to C-terminus: Putative X-Core fused protein (359 aa).

Disordered regions lie at residues 25–48 (SRGRPVSRPFGPHPSPSSSAVPAD) and 312–359 (NAPI…ESQC). Residues 325–352 (VRRRGRSPRRRTPSPRRRRSESPRRRRS) show a composition bias toward basic residues.

The chain is Putative X-Core fused protein from Homo sapiens (Human).